The sequence spans 242 residues: Ribonuclease PH (242 aa).

Residues arginine 87 and 125–127 (STR) each bind phosphate.

It belongs to the RNase PH family. In terms of assembly, homohexameric ring arranged as a trimer of dimers.

It carries out the reaction tRNA(n+1) + phosphate = tRNA(n) + a ribonucleoside 5'-diphosphate. Functionally, phosphorolytic 3'-5' exoribonuclease that plays an important role in tRNA 3'-end maturation. Removes nucleotide residues following the 3'-CCA terminus of tRNAs; can also add nucleotides to the ends of RNA molecules by using nucleoside diphosphates as substrates, but this may not be physiologically important. Probably plays a role in initiation of 16S rRNA degradation (leading to ribosome degradation) during starvation. The sequence is that of Ribonuclease PH from Synechococcus sp. (strain JA-3-3Ab) (Cyanobacteria bacterium Yellowstone A-Prime).